Consider the following 110-residue polypeptide: Large ribosomal subunit protein uL22 (110 aa).

Belongs to the universal ribosomal protein uL22 family. Part of the 50S ribosomal subunit.

In terms of biological role, this protein binds specifically to 23S rRNA; its binding is stimulated by other ribosomal proteins, e.g. L4, L17, and L20. It is important during the early stages of 50S assembly. It makes multiple contacts with different domains of the 23S rRNA in the assembled 50S subunit and ribosome. The globular domain of the protein is located near the polypeptide exit tunnel on the outside of the subunit, while an extended beta-hairpin is found that lines the wall of the exit tunnel in the center of the 70S ribosome. This is Large ribosomal subunit protein uL22 from Exiguobacterium sibiricum (strain DSM 17290 / CCUG 55495 / CIP 109462 / JCM 13490 / 255-15).